A 216-amino-acid chain; its full sequence is Sperm microtubule inner protein 8 (216 aa).

In terms of assembly, microtubule inner protein component of sperm flagellar doublet microtubules. Expressed in testis, prostate and placenta.

The protein resides in the cytoplasm. It localises to the cytoskeleton. The protein localises to the flagellum axoneme. In terms of biological role, microtubule inner protein (MIP) part of the dynein-decorated doublet microtubules (DMTs) in flagellum axoneme. May serve to reinforce and thus stabilize the microtubule structure in the sperm flagella. This is Sperm microtubule inner protein 8 from Homo sapiens (Human).